A 276-amino-acid polypeptide reads, in one-letter code: ADP-dependent (S)-NAD(P)H-hydrate dehydratase (276 aa).

Residues 5-269 (TPKAMCAWIP…EELPTYLKIF (265 aa)) enclose the YjeF C-terminal domain. (6S)-NADPHX contacts are provided by Ala40, Gly103, and His152. Gly211 contacts AMP. Residue Asp212 coordinates (6S)-NADPHX.

It belongs to the NnrD/CARKD family. As to quaternary structure, homotetramer. Requires Mg(2+) as cofactor.

The enzyme catalyses (6S)-NADHX + ADP = AMP + phosphate + NADH + H(+). It carries out the reaction (6S)-NADPHX + ADP = AMP + phosphate + NADPH + H(+). Functionally, catalyzes the dehydration of the S-form of NAD(P)HX at the expense of ADP, which is converted to AMP. Together with NAD(P)HX epimerase, which catalyzes the epimerization of the S- and R-forms, the enzyme allows the repair of both epimers of NAD(P)HX, a damaged form of NAD(P)H that is a result of enzymatic or heat-dependent hydration. This Listeria monocytogenes serovar 1/2a (strain ATCC BAA-679 / EGD-e) protein is ADP-dependent (S)-NAD(P)H-hydrate dehydratase.